Here is a 323-residue protein sequence, read N- to C-terminus: Transcription factor LUX (323 aa).

Disordered regions lie at residues 1–25 (MGEEVQMSDYDVSGDGDRVSEWEMG), 53–139 (ERSR…DLSG), and 267–298 (GYHHQNHNHDPYHQNHRHHHGAGGNGAFESNP). Residues 65-87 (SETTLSSLRGGSSGPNTSSSNNN) show a composition bias toward low complexity. Positions 139 to 200 (GKTLKRPRLV…HLQKYRLYLK (62 aa)) form a DNA-binding region, myb-like GARP.

In terms of assembly, interacts with ELF3 and forms a complex with ELF3 and ELF4.

It localises to the nucleus. In terms of biological role, transcription factor that is essential for the generation of the circadian clock oscillation. Is necessary for activation of CCA1 and LHY expression. Is coregulated with TOC1 and seems to be repressed by CCA1 and LHY by direct binding of these proteins to the evening element in the LUX promoter. Directly regulates the expression of PRR9, a major component of the morning transcriptional feedback circuit, by binding specific sites on PRR9 promoter. Binds to its own promoter, inducing a negative auto-regulatory feedback loop within the core clock. Binds to ELF3 and associates with ELF4 in a diurnal complex which is required for the expression of the growth-promoting transcription factors PIF4 and PIF5 and subsequent hypocotyl growth in the early evening. This is Transcription factor LUX (LUX) from Arabidopsis thaliana (Mouse-ear cress).